Reading from the N-terminus, the 594-residue chain is Frizzled and smoothened-like protein A (594 aa).

Residues 1–22 form the signal peptide; sequence MVDIRKSLFFIIFFIFYNYVNS. At 23-248 the chain is on the extracellular side; the sequence is QKAINSDAFC…NEWYQFKDLT (226 aa). The region spanning 27 to 173 is the FZ domain; that stretch reads NSDAFCQKKT…SNYDLQCLNI (147 aa). Cystine bridges form between Cys-32/Cys-98 and Cys-41/Cys-91. Residues Asn-55 and Asn-106 are each glycosylated (N-linked (GlcNAc...) asparagine). An intrachain disulfide couples Cys-117 to Cys-170. 4 N-linked (GlcNAc...) asparagine glycosylation sites follow: Asn-182, Asn-189, Asn-195, and Asn-206. The chain crosses the membrane as a helical span at residues 249–269; that stretch reads TVTGVISFVCIFFNIFIYGFL. The Cytoplasmic segment spans residues 270–277; that stretch reads NKKHDRHT. The chain crosses the membrane as a helical span at residues 278–298; sequence IGILCLSFSLWCCMLSDLIVA. The Extracellular portion of the chain corresponds to 299–329; it reads SSPDYSLVCPEPGRFARIHDSRCVANGIIFQ. The helical transmembrane segment at 330-350 threads the bilayer; the sequence is WGAVCTTMFWSAMAIDLYLVI. The Cytoplasmic portion of the chain corresponds to 351–361; the sequence is KKLSLPAFTVK. The chain crosses the membrane as a helical span at residues 362 to 382; it reads YFVAAIFTLALLFTTVPLAWD. Topologically, residues 383–403 are extracellular; the sequence is DYGYGFGGVGCWIMSNSVQNG. Residues 404 to 424 form a helical membrane-spanning segment; the sequence is CFWIPMLICLLIGAVSICLII. The Cytoplasmic portion of the chain corresponds to 425 to 448; sequence YEIVKVFKNVGRSGISIILANARL. Residues 449-469 form a helical membrane-spanning segment; sequence FGIVSFIFIEYIYLFVYHFWV. Over 470–507 the chain is Extracellular; that stretch reads QENTEKFTQNITDWVICVQTTGSSDGCPLPKAVPYATQ. Residue Asn-479 is glycosylated (N-linked (GlcNAc...) asparagine). A helical transmembrane segment spans residues 508–528; that stretch reads FIFLFFLRLLGIEVCIFYGIN. Over 529–594 the chain is Cytoplasmic; it reads SRSKNIILES…SKNGGDDDDL (66 aa).

This sequence belongs to the G-protein coupled receptor Fz/Smo family.

The protein resides in the membrane. The polypeptide is Frizzled and smoothened-like protein A (fslA) (Dictyostelium discoideum (Social amoeba)).